Here is a 70-residue protein sequence, read N- to C-terminus: MESSRKSYVLMLFLAFVIMNVCSVSGEPKDGEIAGFEMEEARYDACVNACLEHHPNVRECEEACKNPVPP.

Positions M1–G26 are cleaved as a signal peptide. Positions E27 to R42 are excised as a propeptide. Disulfide bonds link C46/C64 and C50/C60.

This sequence belongs to the short scorpion toxin superfamily. Potassium channel inhibitor kappa-KTx family. Kappa-KTx 2 subfamily. In terms of tissue distribution, expressed by the venom gland.

The protein localises to the secreted. Voltage-independently blocks potassium currents on hKv1.1/KCNA1 (IC(50)=217 uM), and hKv1.4/KCNA4 (IC(50)=71 uM) (expressed in CHO cells). The chain is Potassium channel toxin kappa-KTx 2.5 from Opisthacanthus cayaporum (South American scorpion).